Consider the following 266-residue polypeptide: 5'-nucleotidase SurE (266 aa).

Residues aspartate 8, aspartate 9, serine 42, and asparagine 98 each coordinate a divalent metal cation.

The protein belongs to the SurE nucleotidase family. A divalent metal cation is required as a cofactor.

Its subcellular location is the cytoplasm. It carries out the reaction a ribonucleoside 5'-phosphate + H2O = a ribonucleoside + phosphate. Nucleotidase that shows phosphatase activity on nucleoside 5'-monophosphates. This chain is 5'-nucleotidase SurE, found in Methanocaldococcus jannaschii (strain ATCC 43067 / DSM 2661 / JAL-1 / JCM 10045 / NBRC 100440) (Methanococcus jannaschii).